The chain runs to 600 residues: MPGGPGAPSSPAASSGSSRAAPSGIAACPLSPPPLARGSPQASGPRRGASVPQKLAETLSSQYGLNVFVAGLLFLLAWAVHATGVGKSDLLCVLTALMLLQLLWMLWYVGRSYMQRRLIRPKDTHAGARWLRGSITLFAFITVVLGCLKVAYFIGFSECLSATEGVFPVTHAVHTLLQVYFLWGHAKDIIMSFKTLERFGVIHSVFTNLLLWANSVLNESKHQLNEHKERLITLGFGNITIVLDDHTPQCNCTPPALCSALSHGIYYLYPFNIEYQILASTMLYVLWKNIGRRVDSSQHQKMQCRFDGVLVGSVLGLTVLAATIAVVVVYMIHIGRSKSKSESALIMFYLYAITVLLLMGAAGLVGSWIYRVDEKSLDESKNPARKLDVDLLVATGSGSWLLSWGSILAIACAETRPPYTWYNLPYSVLVIVEKYVQNIFIIESVHLEPEGVPEDVRTLRVVTVCSSEAAALAASTLGSQGMAQDGSPAVNGNLCLQQRCGKEDQESGWEGATGTTRCLDFLQGGMKRRLLRNITAFLFLCNISLWIPPAFGCRPEYDNGLEEIVFGFEPWIIVVNLAMPFSIFYRMHAAAALFEVYCKI.

The interval 1 to 50 (MPGGPGAPSSPAASSGSSRAAPSGIAACPLSPPPLARGSPQASGPRRGAS) is disordered. Over 1 to 56 (MPGGPGAPSSPAASSGSSRAAPSGIAACPLSPPPLARGSPQASGPRRGASVPQKLA) the chain is Cytoplasmic. Residues 7-27 (APSSPAASSGSSRAAPSGIAA) show a composition bias toward low complexity. The chain crosses the membrane as a helical span at residues 57-78 (ETLSSQYGLNVFVAGLLFLLAW). At 79-86 (AVHATGVG) the chain is on the extracellular side. Residues 87-110 (KSDLLCVLTALMLLQLLWMLWYVG) form a helical membrane-spanning segment. Over 111–128 (RSYMQRRLIRPKDTHAGA) the chain is Cytoplasmic. A helical membrane pass occupies residues 129–151 (RWLRGSITLFAFITVVLGCLKVA). Residues 152-161 (YFIGFSECLS) are Extracellular-facing. The helical transmembrane segment at 162-186 (ATEGVFPVTHAVHTLLQVYFLWGHA) threads the bilayer. At 187–194 (KDIIMSFK) the chain is on the cytoplasmic side. The chain crosses the membrane as a helical span at residues 195–217 (TLERFGVIHSVFTNLLLWANSVL). At 218–262 (NESKHQLNEHKERLITLGFGNITIVLDDHTPQCNCTPPALCSALS) the chain is on the extracellular side. A helical membrane pass occupies residues 263–288 (HGIYYLYPFNIEYQILASTMLYVLWK). The Cytoplasmic portion of the chain corresponds to 289 to 309 (NIGRRVDSSQHQKMQCRFDGV). A helical membrane pass occupies residues 310 to 332 (LVGSVLGLTVLAATIAVVVVYMI). The Extracellular segment spans residues 333–342 (HIGRSKSKSE). A helical transmembrane segment spans residues 343–368 (SALIMFYLYAITVLLLMGAAGLVGSW). The Cytoplasmic segment spans residues 369 to 386 (IYRVDEKSLDESKNPARK). Residues 387–411 (LDVDLLVATGSGSWLLSWGSILAIA) form a helical membrane-spanning segment. At 412-421 (CAETRPPYTW) the chain is on the extracellular side. A helical transmembrane segment spans residues 422–442 (YNLPYSVLVIVEKYVQNIFII). The Cytoplasmic portion of the chain corresponds to 443–532 (ESVHLEPEGV…QGGMKRRLLR (90 aa)). The chain crosses the membrane as a helical span at residues 533 to 551 (NITAFLFLCNISLWIPPAF). The Extracellular portion of the chain corresponds to 552 to 569 (GCRPEYDNGLEEIVFGFE). The helical transmembrane segment at 570 to 593 (PWIIVVNLAMPFSIFYRMHAAAAL) threads the bilayer. At 594–600 (FEVYCKI) the chain is on the cytoplasmic side.

It belongs to the otopetrin family. In terms of assembly, homodimer. Interacts with STAT1, independently of STAT1 phosphorylation status. As to expression, expressed in thymus, heart, kidney, skin, vestibular system of the inner ear, sour taste cells, heart, uterus, dorsal root ganglion, adrenal gland, lactating mammary gland and stimulated mast cells. In the inner ear, expressed in the supporting cells in extrastriolar regions of the saccule and in the utricle, but not in the cochlea. Expressed in brown adipose tissue. Expressed in epididymal white adipose tissue (eWAT), as well as in inguinal fat, in obese animals, but hardly detectable in eWAT from lean mice. Expressed in acid-sensing taste receptor cells (PKD2L1-positive cells), but not in other types of taste cells (at protein level).

The protein localises to the cell membrane. It is found in the cell projection. It localises to the microvillus. The enzyme catalyses H(+)(in) = H(+)(out). Activated by both acid and alkali, with proton influx in response to extracellular acid and proton efflux during alkali stimulation. Inhibited by Zn(2+); this inhibition is thought to be pH-sensitive. Currents evoked in response to mild acid (pH 6.0) stimulus may also be mildly potentiated by exposure to Zn(2+). Activated by NH(4)Cl. Functionally, proton-selective ion channel. Biphasically modulated by acid and alkali, mediating proton influx and efflux in response to extracellular acid and base stimulation, respectively. Sour taste receptor, which carries inward currents in response to extracellular acidification. Sensor for ammonium chloride (NH(4)Cl) in taste receptor cells. NH(4)Cl acts by increasing the intracellular pH, thereby generating a driving force for proton entry through OTOP1 channel. Might also participate in alkaline sensation. Plays a role in the regulation of Ca(2+) flux in response to purigenic (ATP, ADP and UDP) stimuli, leading to increase in cytosolic Ca(2+) due to influx of extracellular calcium. May play this role by inhibiting P2Y purinoceptor-mediated Ca(2+) release in a Ca(2+)-dependent manner and promote an influx of Ca(2+) in response to ATP. Through this mechanism and possibly others, plays a role in the formation and function of calcium carbonate-based structures in the vestibular system of the inner ear, called otoconia, that sense gravity and linear acceleration. In obesity, may attenuate adipose tissue inflammation, through the negative regulation of IFNG signaling, hence may play an adaptive role in the maintainance of metabolic homeostasis. Following alkali activation, may also be permeable Na(+), K(+), Cs(+) and Li(+). This is Proton channel OTOP1 from Mus musculus (Mouse).